A 122-amino-acid polypeptide reads, in one-letter code: Cysteine proteinase inhibitor 5 (122 aa).

The first 26 residues, 1–26 (MTSKVVFLLLLSLVVVLLPLYASAAA), serve as a signal peptide directing secretion. Residues 29–117 (GGWSPISNVT…RNLTSFEPAN (89 aa)) enclose the Cystatin domain. Asn-36 carries an N-linked (GlcNAc...) asparagine glycan. The Secondary area of contact motif lies at 72-76 (QVVSG). Asn-109 carries an N-linked (GlcNAc...) asparagine glycan.

Belongs to the cystatin family. Phytocystatin subfamily.

It localises to the secreted. Specific inhibitor of cysteine proteinases. Probably involved in the regulation of endogenous processes and in defense against pests and pathogens. The protein is Cysteine proteinase inhibitor 5 (CYS5) of Arabidopsis thaliana (Mouse-ear cress).